The chain runs to 326 residues: Vitamin B12 import system permease protein BtuC (326 aa).

9 consecutive transmembrane segments (helical) span residues 17–39 (LSLSLLVLLATLLSLCAGEQWIA), 59–81 (RTLAVLLVGAALALSGAVMQALF), 88–107 (PGLLGVSNGAGVGLIAAVLL), 111–133 (QLAGWALGLCAIAGALIITLILL), 146–168 (LLAGVALGIICSALMTWAIYFST), 188–205 (WQQSWLMIALIPVLIWIC), 242–264 (MVGVSVAMAGAIGFIGLVIPHIL), 274–296 (VLLPGCALAGAIALLLADVVARL), and 303–322 (LPIGVVTATLGAPVFIWLLL).

It belongs to the binding-protein-dependent transport system permease family. FecCD subfamily. The complex is composed of two ATP-binding proteins (BtuD), two transmembrane proteins (BtuC) and a solute-binding protein (BtuF).

Its subcellular location is the cell inner membrane. Functionally, part of the ABC transporter complex BtuCDF involved in vitamin B12 import. Involved in the translocation of the substrate across the membrane. The polypeptide is Vitamin B12 import system permease protein BtuC (Salmonella paratyphi A (strain ATCC 9150 / SARB42)).